Reading from the N-terminus, the 331-residue chain is Cytochrome bo(3) ubiquinol oxidase subunit 2 (331 aa).

Positions 1–23 (MTKANPFAALKWLSLAPALLLGG) are cleaved as a signal peptide. Cysteine 24 is lipidated: N-palmitoyl cysteine. The S-diacylglycerol cysteine moiety is linked to residue cysteine 24. Topologically, residues 24-41 (CDMTLFNPKGQVGMDERT) are periplasmic. Residues 42–62 (LIITATLLMLIVVIPVIVMTL) traverse the membrane as a helical segment. Over 63–86 (AFAWKYRASNTQAEYKPDWHHSNR) the chain is Cytoplasmic. Residues 87–107 (IEAVVWLVPCVIIAILGWITW) traverse the membrane as a helical segment. At 108–331 (ESTHKLDPYR…DMHMQPSTQE (224 aa)) the chain is on the periplasmic side.

It belongs to the cytochrome c oxidase subunit 2 family. In terms of assembly, heterooctamer of two A chains, two B chains, two C chains and two D chains.

The protein localises to the cell inner membrane. Its function is as follows. Cytochrome bo(3) ubiquinol terminal oxidase is the component of the aerobic respiratory chain of E.coli that predominates when cells are grown at high aeration. Has proton pump activity across the membrane in addition to electron transfer, pumping 2 protons/electron. The protein is Cytochrome bo(3) ubiquinol oxidase subunit 2 (cyoA) of Pseudomonas aeruginosa (strain ATCC 15692 / DSM 22644 / CIP 104116 / JCM 14847 / LMG 12228 / 1C / PRS 101 / PAO1).